Reading from the N-terminus, the 463-residue chain is Asparagine--tRNA ligase (463 aa).

It belongs to the class-II aminoacyl-tRNA synthetase family. Homodimer.

It is found in the cytoplasm. It carries out the reaction tRNA(Asn) + L-asparagine + ATP = L-asparaginyl-tRNA(Asn) + AMP + diphosphate + H(+). The sequence is that of Asparagine--tRNA ligase from Bacillus cytotoxicus (strain DSM 22905 / CIP 110041 / 391-98 / NVH 391-98).